Here is a 322-residue protein sequence, read N- to C-terminus: HPr kinase/phosphorylase (322 aa).

Active-site residues include His-142 and Lys-163. 157–164 (GASGVGKS) contributes to the ATP binding site. Ser-164 contacts Mg(2+). Residue Asp-181 is the Proton acceptor; for phosphorylation activity. Proton donor; for dephosphorylation activity of the active site. The segment at 205–214 (MEIRGIGIID) is important for the catalytic mechanism of both phosphorylation and dephosphorylation. Residue Glu-206 participates in Mg(2+) binding. Residue Arg-247 is part of the active site. Residues 268-273 (PVKVGR) form an important for the catalytic mechanism of dephosphorylation region.

This sequence belongs to the HPrK/P family. As to quaternary structure, homohexamer. Mg(2+) is required as a cofactor.

The catalysed reaction is [HPr protein]-L-serine + ATP = [HPr protein]-O-phospho-L-serine + ADP + H(+). The enzyme catalyses [HPr protein]-O-phospho-L-serine + phosphate + H(+) = [HPr protein]-L-serine + diphosphate. In terms of biological role, catalyzes the ATP- as well as the pyrophosphate-dependent phosphorylation of a specific serine residue in HPr, a phosphocarrier protein of the phosphoenolpyruvate-dependent sugar phosphotransferase system (PTS). HprK/P also catalyzes the pyrophosphate-producing, inorganic phosphate-dependent dephosphorylation (phosphorolysis) of seryl-phosphorylated HPr (P-Ser-HPr). The two antagonistic activities of HprK/P are regulated by several intracellular metabolites, which change their concentration in response to the absence or presence of rapidly metabolisable carbon sources (glucose, fructose, etc.) in the growth medium. Therefore, by controlling the phosphorylation state of HPr, HPrK/P is a sensor enzyme that plays a major role in the regulation of carbon metabolism and sugar transport: it mediates carbon catabolite repression (CCR), and regulates PTS-catalyzed carbohydrate uptake and inducer exclusion. The polypeptide is HPr kinase/phosphorylase (Lactobacillus acidophilus (strain ATCC 700396 / NCK56 / N2 / NCFM)).